We begin with the raw amino-acid sequence, 232 residues long: Glycerol-3-phosphate acyltransferase 4 (232 aa).

6 consecutive transmembrane segments (helical) span residues 4-24 (VFLIMIPAGYLVGAIPMAYLL), 54-76 (LGLAVFVFDVSKGAIIILLAGWL), 80-99 (LWQQIVVGLLTIAGHNWPVF), 107-127 (GIATSLGVALVMAPVPALIAL), 143-163 (VFLGVGALPVMSGYFHGFFGV), and 168-188 (TVTWGFAGLFLIMIVRRLMAP).

This sequence belongs to the PlsY family. In terms of assembly, probably interacts with PlsX.

It is found in the cell membrane. The catalysed reaction is an acyl phosphate + sn-glycerol 3-phosphate = a 1-acyl-sn-glycero-3-phosphate + phosphate. Its pathway is lipid metabolism; phospholipid metabolism. Its function is as follows. Catalyzes the transfer of an acyl group from acyl-phosphate (acyl-PO(4)) to glycerol-3-phosphate (G3P) to form lysophosphatidic acid (LPA). This enzyme utilizes acyl-phosphate as fatty acyl donor, but not acyl-CoA or acyl-ACP. This chain is Glycerol-3-phosphate acyltransferase 4, found in Dehalococcoides mccartyi (strain CBDB1).